A 1298-amino-acid polypeptide reads, in one-letter code: Histone-lysine N-methyltransferase EHMT1 (1298 aa).

2 disordered regions span residues 1-111 (MAAA…HVTA) and 144-192 (ASSL…RKLP). A2 is modified (N-acetylalanine). K22 is covalently cross-linked (Glycyl lysine isopeptide (Lys-Gly) (interchain with G-Cter in SUMO1); alternate). K22 is covalently cross-linked (Glycyl lysine isopeptide (Lys-Gly) (interchain with G-Cter in SUMO2); alternate). Residues 38–50 (SAEKQAGEAHMAA) show a composition bias toward basic and acidic residues. 2 stretches are compositionally biased toward polar residues: residues 54-67 (TNGS…SSHA) and 76-89 (SARV…NTLT). The span at 96–105 (VSERDSEAAK) shows a compositional bias: basic and acidic residues. Glycyl lysine isopeptide (Lys-Gly) (interchain with G-Cter in SUMO2) cross-links involve residues K190, K199, K231, K234, K317, and K327. The disordered stretch occupies residues 211 to 234 (VVGLHAASKDPREVREARDHKEPK). The segment covering 217-234 (ASKDPREVREARDHKEPK) has biased composition (basic and acidic residues). The disordered stretch occupies residues 339–479 (VNGESLEMDS…QTAPGDSTGY (141 aa)). The segment covering 344–360 (LEMDSDEDDSEELEEDD) has biased composition (acidic residues). Residues 373–393 (EDSRTSKESMSEADRAQKMDG) show a composition bias toward basic and acidic residues. The segment covering 394–416 (ESEEEQESVDTGEEEEGGDESDL) has biased composition (acidic residues). A Glycyl lysine isopeptide (Lys-Gly) (interchain with G-Cter in SUMO2) cross-link involves residue K432. The residue at position 435 (S435) is a Phosphoserine. Over residues 440 to 452 (PARKRRRRSRKKP) the composition is skewed to basic residues. A compositionally biased stretch (polar residues) spans 460–474 (SYKSSAGSAEQTAPG). At S483 the chain carries Phosphoserine. Glycyl lysine isopeptide (Lys-Gly) (interchain with G-Cter in SUMO2) cross-links involve residues K492, K559, K644, K659, K684, and K731. Residues 644-717 (KADTTSTVTP…TPGLSQGPGK (74 aa)) are disordered. ANK repeat units follow at residues 737-766 (FHPK…DPNF), 772-801 (NKRS…NIDT), 805-834 (DQRT…LVDP), 838-868 (EGST…DVNC), 872-901 (GGWT…DINI), 905-934 (EENI…DLHA), 938-967 (HGDS…DVTL), and 971-1004 (EGET…DRPS). The segment at 905-907 (EEN) is histone H3K9me binding. Phosphoserine occurs at positions 1004 and 1048. In terms of domain architecture, Pre-SET spans 1060 to 1123 (QYCVCIDDCS…NCRNRVVQNG (64 aa)). C1062, C1064, C1068, C1073, C1075, C1105, C1109, C1111, and C1115 together coordinate Zn(2+). An SET domain is found at 1126–1243 (ARLQLYRTRD…AGEQLGFDYG (118 aa)). S-adenosyl-L-methionine-binding positions include 1136 to 1138 (MGW), Y1173, and 1200 to 1201 (NH). An interaction with histone H3 region spans residues 1162–1181 (DSEADVREEDSYLFDLDNKD). C1203 contributes to the Zn(2+) binding site. The interaction with histone H3 stretch occupies residues 1242 to 1245 (YGER). C1256 is a Zn(2+) binding site. R1257 contributes to the S-adenosyl-L-methionine binding site. Zn(2+) contacts are provided by C1258 and C1263. The disordered stretch occupies residues 1274 to 1298 (QASAAQEAQEDGLPDTSSAAAADPL).

Belongs to the class V-like SAM-binding methyltransferase superfamily. In terms of assembly, heterodimer; heterodimerizes with EHMT2. Interacts with WIZ and EHMT2. Part of the E2F6.com-1 complex in G0 phase composed of E2F6, MGA, MAX, TFDP1, CBX3, BAT8, EHMT1, RING1, RNF2, MBLR, L3MBTL2 and YAF2. Interacts (via ANK repeats) with RELA (when monomethylated at 'Lys-310'). Interacts with MPHOSPH8. Interacts with CDYL. Interacts with REST only in the presence of CDYL. Part of a complex containing at least CDYL, REST, WIZ, SETB1, EHMT1 and EHMT2. Interacts with BAZ2B. As to expression, widely expressed.

The protein resides in the nucleus. The protein localises to the chromosome. It catalyses the reaction N(6)-methyl-L-lysyl(9)-[histone H3] + S-adenosyl-L-methionine = N(6),N(6)-dimethyl-L-lysyl(9)-[histone H3] + S-adenosyl-L-homocysteine + H(+). The enzyme catalyses L-lysyl(9)-[histone H3] + S-adenosyl-L-methionine = N(6)-methyl-L-lysyl(9)-[histone H3] + S-adenosyl-L-homocysteine + H(+). Methyltransferase activity is inhibited by BIX-01294. Efficiently inhibited by compound E72, a BIX-01294 derivative in which the diazepane ring and the benzyl are replaced with a 3-dimethylaminopropyl and a 5-aminopentyl group at sites B and C, respectively. In terms of biological role, histone methyltransferase that specifically mono- and dimethylates 'Lys-9' of histone H3 (H3K9me1 and H3K9me2, respectively) in euchromatin. H3K9me represents a specific tag for epigenetic transcriptional repression by recruiting HP1 proteins to methylated histones. Also weakly methylates 'Lys-27' of histone H3 (H3K27me). Also required for DNA methylation, the histone methyltransferase activity is not required for DNA methylation, suggesting that these 2 activities function independently. Probably targeted to histone H3 by different DNA-binding proteins like E2F6, MGA, MAX and/or DP1. During G0 phase, it probably contributes to silencing of MYC- and E2F-responsive genes, suggesting a role in G0/G1 transition in cell cycle. In addition to the histone methyltransferase activity, also methylates non-histone proteins: mediates dimethylation of 'Lys-373' of p53/TP53. Represses the expression of mitochondrial function-related genes, perhaps by occupying their promoter regions, working in concert with probable chromatin reader BAZ2B. The sequence is that of Histone-lysine N-methyltransferase EHMT1 (EHMT1) from Homo sapiens (Human).